The following is a 498-amino-acid chain: Protein nucleotidyltransferase YdiU (498 aa).

Residues G88, G90, R91, K111, D123, G124, R174, and R181 each coordinate ATP. D250 acts as the Proton acceptor in catalysis. Residues N251 and D260 each contribute to the Mg(2+) site. D260 is a binding site for ATP.

It belongs to the SELO family. Mg(2+) is required as a cofactor. Mn(2+) serves as cofactor.

It catalyses the reaction L-seryl-[protein] + ATP = 3-O-(5'-adenylyl)-L-seryl-[protein] + diphosphate. It carries out the reaction L-threonyl-[protein] + ATP = 3-O-(5'-adenylyl)-L-threonyl-[protein] + diphosphate. The enzyme catalyses L-tyrosyl-[protein] + ATP = O-(5'-adenylyl)-L-tyrosyl-[protein] + diphosphate. The catalysed reaction is L-histidyl-[protein] + UTP = N(tele)-(5'-uridylyl)-L-histidyl-[protein] + diphosphate. It catalyses the reaction L-seryl-[protein] + UTP = O-(5'-uridylyl)-L-seryl-[protein] + diphosphate. It carries out the reaction L-tyrosyl-[protein] + UTP = O-(5'-uridylyl)-L-tyrosyl-[protein] + diphosphate. Its function is as follows. Nucleotidyltransferase involved in the post-translational modification of proteins. It can catalyze the addition of adenosine monophosphate (AMP) or uridine monophosphate (UMP) to a protein, resulting in modifications known as AMPylation and UMPylation. This chain is Protein nucleotidyltransferase YdiU, found in Methylorubrum populi (strain ATCC BAA-705 / NCIMB 13946 / BJ001) (Methylobacterium populi).